Reading from the N-terminus, the 154-residue chain is MSSDQHLQVSKIQAGTVIDHIPAGQALQVLQILGTNGASDDQITVGMNVTSERHHRKDIVKIEGRELSQDEVDVLSLIAPDATINIVRDYEVDEKRRVDRPDVVAGVLSCPNPNCITANDEPVRSGFDVLDDGMRCQYCEQIVSEDIPSLIDPE.

Residues cysteine 110, cysteine 115, cysteine 136, and cysteine 139 each coordinate Zn(2+).

The protein belongs to the PyrI family. As to quaternary structure, contains catalytic and regulatory chains. Zn(2+) serves as cofactor.

Its function is as follows. Involved in allosteric regulation of aspartate carbamoyltransferase. The polypeptide is Aspartate carbamoyltransferase regulatory chain (Halobacterium salinarum (strain ATCC 700922 / JCM 11081 / NRC-1) (Halobacterium halobium)).